Here is a 223-residue protein sequence, read N- to C-terminus: Alpha-enolase (223 aa).

A Mg(2+)-binding site is contributed by serine 8. Tyrosine 12 carries the phosphotyrosine modification. Lysine 25 is subject to N6-acetyllysine. Residue glutamate 39 coordinates substrate. Lysine 61 carries the post-translational modification N6-acetyllysine. The active-site Proton donor is the glutamate 69. Lysine 87 bears the N6-acetyllysine; alternate mark. N6-malonyllysine; alternate is present on lysine 87. Lysine 87 carries the post-translational modification N6-succinyllysine; alternate. Positions 99 and 119 each coordinate Mg(2+). Aspartate 119 serves as a coordination point for substrate. N6-acetyllysine is present on residues lysine 133 and lysine 141. Lysine 141 functions as the Proton acceptor in the catalytic mechanism. Residues 168 to 171 and lysine 192 contribute to the substrate site; that span reads SHRS. Residues 202-223 are required for interaction with PLG; it reads YNQILRIEEELGSKSFRNPLAK. N6-acetyllysine; alternate is present on lysine 215. Lysine 215 is subject to N6-malonyllysine; alternate. At lysine 215 the chain carries N6-succinyllysine; alternate.

This sequence belongs to the enolase family. In terms of assembly, mammalian enolase is composed of 3 isozyme subunits, alpha, beta and gamma, which can form homodimers or heterodimers which are cell-type and development-specific. ENO1 interacts with PLG in the neuronal plasma membrane and promotes its activation. The C-terminal lysine is required for this binding. Interacts with ENO4 and PGAM2. Interacts with CMTM6. Requires Mg(2+) as cofactor. ISGylated. Post-translationally, lysine 2-hydroxyisobutyrylation (Khib) by p300/EP300 activates the phosphopyruvate hydratase activity.

The protein localises to the cytoplasm. The protein resides in the cell membrane. The catalysed reaction is (2R)-2-phosphoglycerate = phosphoenolpyruvate + H2O. The protein operates within carbohydrate degradation; glycolysis; pyruvate from D-glyceraldehyde 3-phosphate: step 4/5. Functionally, glycolytic enzyme the catalyzes the conversion of 2-phosphoglycerate to phosphoenolpyruvate. In addition to glycolysis, involved in various processes such as growth control, hypoxia tolerance and allergic responses. May also function in the intravascular and pericellular fibrinolytic system due to its ability to serve as a receptor and activator of plasminogen on the cell surface of several cell-types such as leukocytes and neurons. Stimulates immunoglobulin production. The polypeptide is Alpha-enolase (Mesocricetus auratus (Golden hamster)).